The chain runs to 659 residues: UDP-glucuronate:xylan alpha-glucuronosyltransferase 1 (659 aa).

Over residues 1–14 the composition is skewed to low complexity; sequence MANSPAAPAPTTTT. The segment at 1 to 20 is disordered; that stretch reads MANSPAAPAPTTTTGGDSRR. A helical; Signal-anchor for type II membrane protein membrane pass occupies residues 70-90; sequence FQIVKLLLFILLSATLFTIIY. Mn(2+) contacts are provided by Asp416 and Asp418. Substrate-binding positions include 416–418, 445–447, 472–476, and 526–531; these read DAD, NSG, NGGDQ, and HYLGMK. His526 contributes to the Mn(2+) binding site.

Belongs to the glycosyltransferase 8 family. Glycogenin subfamily. Requires Mn(2+) as cofactor.

The protein resides in the golgi apparatus membrane. Functionally, glycosyltransferase required for the addition of both glucuronic acid and 4-O-methylglucuronic acid branches to xylan in stem cell walls. In association with GUX2, is responsible for almost all of the substitutions of the xylan backbone in stem glucuronoxylan. This Arabidopsis thaliana (Mouse-ear cress) protein is UDP-glucuronate:xylan alpha-glucuronosyltransferase 1 (GUX1).